The primary structure comprises 229 residues: HTH-type transcriptional regulator HbdR (229 aa).

In terms of domain architecture, HTH tetR-type spans 20-80 (EERRHQIISA…LTLKNVLDTY (61 aa)). Positions 43–62 (TILQIAREAKVSTGLIYQYF) form a DNA-binding region, H-T-H motif.

Homodimer in solution.

Its activity is regulated as follows. Activity is regulated by the effector molecules 3-hydroxybenzoyl-CoA and benzoyl-CoA, which bind to HbdR, alleviating its repression on the three target promoters and inducing the expression of the hbd genes. Transcriptional regulator that controls the expression of the hbd cluster, which contains three catabolic operons and is responsible for the anaerobic degradation of 3-hydroxybenzoate. HbdR suppresses the activity of the three catabolic promoters (PhbdN, PhbdE and PhbdH) by binding to a conserved palindromic operator box. In addition, it slightly increases activity of its own promoter (PhbdR). The HbdR-mediated repression of hbd genes may play a crucial biological role in maintaining requisite hydroxybenzoate levels in the cell. The polypeptide is HTH-type transcriptional regulator HbdR (Aromatoleum sp. (strain CIB) (Azoarcus sp. (strain CIB))).